The sequence spans 203 residues: 2-phospho-L-lactate guanylyltransferase (203 aa).

It belongs to the CofC family. Homodimer.

It carries out the reaction (2S)-2-phospholactate + GTP + H(+) = (2S)-lactyl-2-diphospho-5'-guanosine + diphosphate. It functions in the pathway cofactor biosynthesis; coenzyme F420 biosynthesis. Functionally, guanylyltransferase that catalyzes the activation of (2S)-2-phospholactate (2-PL) as (2S)-lactyl-2-diphospho-5'-guanosine, via the condensation of 2-PL with GTP. It is involved in the biosynthesis of coenzyme F420, a hydride carrier cofactor. This chain is 2-phospho-L-lactate guanylyltransferase, found in Halomicrobium mukohataei (strain ATCC 700874 / DSM 12286 / JCM 9738 / NCIMB 13541) (Haloarcula mukohataei).